The primary structure comprises 124 residues: MSGVVKRATRVAERLREDLSNLLRDLRDPRIAGVLVSRVEITDDLQSAKVHVRHEFGAEDAAARRALLKGLEAASGRLRRDVARTMGLRVVPTLRFFYDEGPDAERRIEELLREIKDGSSGERS.

The protein belongs to the RbfA family. In terms of assembly, monomer. Binds 30S ribosomal subunits, but not 50S ribosomal subunits or 70S ribosomes.

The protein localises to the cytoplasm. In terms of biological role, one of several proteins that assist in the late maturation steps of the functional core of the 30S ribosomal subunit. Associates with free 30S ribosomal subunits (but not with 30S subunits that are part of 70S ribosomes or polysomes). Required for efficient processing of 16S rRNA. May interact with the 5'-terminal helix region of 16S rRNA. The sequence is that of Ribosome-binding factor A from Sorangium cellulosum (strain So ce56) (Polyangium cellulosum (strain So ce56)).